The following is a 362-amino-acid chain: Cell death regulator Aven (362 aa).

Disordered stretches follow at residues 1–111, 214–237, and 253–362; these read MQAE…NYSK, VKPK…GPGG, and VLLG…SMIS. Positions 8-17 are enriched in basic residues; that stretch reads RGGRGRRPGR. A compositionally biased stretch (gly residues) spans 37–47; the sequence is RGGGGGGGGDG. The segment covering 50 to 60 has biased composition (basic residues); sequence RRGRGRGRGFR. Residues 61-72 are compositionally biased toward gly residues; the sequence is GARGGRGGGGAP. Over residues 90 to 105 the composition is skewed to acidic residues; that stretch reads VEDDSDAETYGEENDE. Ser-94 is subject to Phosphoserine. Position 230 is an N6-methyllysine (Lys-230). The span at 350–362 shows a compositional bias: acidic residues; sequence EEELEDWLDSMIS.

In terms of assembly, binds Apaf-1, BCL-2 and BAD (Bcl-xl). As to expression, highly expressed in testis, ovary, thymus, prostate, spleen, small intestine, colon, heart, skeletal muscle, liver, kidney and pancreas.

Its subcellular location is the endomembrane system. Its function is as follows. Protects against apoptosis mediated by Apaf-1. The chain is Cell death regulator Aven (AVEN) from Homo sapiens (Human).